Here is a 443-residue protein sequence, read N- to C-terminus: MVMEKLGDSLQGALKKLIGAGRIDERTVNEVVKDIQRALLQADVNVKLVMGMSQRIKERAMKEDPPAGMNPREHVIRIVYQELMEIIGKGADIQLKPQTIMMVGLQGSGKTTSAAKLARYFQRKGLKAGVVAADTFRPGAYHQLKTLSEKLNVGFYGEEGNPDAVEITIHGLKALEKYDIKIVDTAGRHALEADLIEEMERIHAVAKPDHKFMVLDAGIGQQASQQAHAFNDSVGITGVIITKLDGTAKGGGALSAVSETKAPIAFIGVGETPEDFEKFEADRFISRLLGMGDLKSLMEKAEESLSEEDVNVEALMQGRFTLKDMYKQLEAMNKMGPLKQIMSMLPMGMGGLGGVKLSDEMFQATSDKMKNYKVIMDSMTEDEMADPKLIGGSRIKRISRGSGCSPEDVRELLKYHKTMQTALKGFRGGKFNIQKMMKKKMGM.

GTP contacts are provided by residues 104–111 (GLQGSGKT), 184–188 (DTAGR), and 242–245 (TKLD).

This sequence belongs to the GTP-binding SRP family. SRP54 subfamily. As to quaternary structure, part of the signal recognition particle protein translocation system, which is composed of SRP and FtsY. Archaeal SRP consists of a 7S RNA molecule of 300 nucleotides and two protein subunits: SRP54 and SRP19.

The protein localises to the cytoplasm. It carries out the reaction GTP + H2O = GDP + phosphate + H(+). Involved in targeting and insertion of nascent membrane proteins into the cytoplasmic membrane. Binds to the hydrophobic signal sequence of the ribosome-nascent chain (RNC) as it emerges from the ribosomes. The SRP-RNC complex is then targeted to the cytoplasmic membrane where it interacts with the SRP receptor FtsY. The polypeptide is Signal recognition particle 54 kDa protein (Methanosarcina mazei (strain ATCC BAA-159 / DSM 3647 / Goe1 / Go1 / JCM 11833 / OCM 88) (Methanosarcina frisia)).